The primary structure comprises 1446 residues: DNA polymerase III PolC-type (1446 aa).

The 157-residue stretch at Tyr-425–Leu-581 folds into the Exonuclease domain.

It belongs to the DNA polymerase type-C family. PolC subfamily.

It is found in the cytoplasm. The catalysed reaction is DNA(n) + a 2'-deoxyribonucleoside 5'-triphosphate = DNA(n+1) + diphosphate. Functionally, required for replicative DNA synthesis. This DNA polymerase also exhibits 3' to 5' exonuclease activity. In Latilactobacillus sakei subsp. sakei (strain 23K) (Lactobacillus sakei subsp. sakei), this protein is DNA polymerase III PolC-type.